Here is a 1045-residue protein sequence, read N- to C-terminus: Endoglucanase B (1045 aa).

The signal sequence occupies residues methionine 1–alanine 33. The tract at residues alanine 34 to proline 492 is catalytic. Aspartate 91 acts as the Nucleophile in catalysis. Active-site residues include histidine 410, aspartate 449, and glutamate 458. In terms of domain architecture, CBM3 spans aspartate 493–threonine 642. Linker ('hinge') (Pro-Thr box) stretches follow at residues threonine 644–proline 650, alanine 734–proline 748, alanine 831–alanine 846, and serine 931–proline 944. Fibronectin type-III domains follow at residues threonine 653–threonine 743, threonine 751–proline 840, and valine 849–valine 940. The region spanning proline 939–glycine 1045 is the CBM2 domain. Cysteine 946 and cysteine 1044 are disulfide-bonded.

This sequence belongs to the glycosyl hydrolase 9 (cellulase E) family.

It catalyses the reaction Endohydrolysis of (1-&gt;4)-beta-D-glucosidic linkages in cellulose, lichenin and cereal beta-D-glucans.. Functionally, the biological conversion of cellulose to glucose generally requires three types of hydrolytic enzymes: (1) Endoglucanases which cut internal beta-1,4-glucosidic bonds; (2) Exocellobiohydrolases that cut the disaccharide cellobiose from the non-reducing end of the cellulose polymer chain; (3) Beta-1,4-glucosidases which hydrolyze the cellobiose and other short cello-oligosaccharides to glucose. This Cellulomonas fimi protein is Endoglucanase B (cenB).